The primary structure comprises 499 residues: Glutamate--tRNA ligase (499 aa).

Positions 10–20 (PSPTGTPHVGM) match the 'HIGH' region motif. Residues 255 to 259 (KLSKR) carry the 'KMSKS' region motif. An ATP-binding site is contributed by lysine 258.

Belongs to the class-I aminoacyl-tRNA synthetase family. Glutamate--tRNA ligase type 1 subfamily. In terms of assembly, monomer.

The protein localises to the cytoplasm. The catalysed reaction is tRNA(Glu) + L-glutamate + ATP = L-glutamyl-tRNA(Glu) + AMP + diphosphate. In terms of biological role, catalyzes the attachment of glutamate to tRNA(Glu) in a two-step reaction: glutamate is first activated by ATP to form Glu-AMP and then transferred to the acceptor end of tRNA(Glu). The polypeptide is Glutamate--tRNA ligase (Corynebacterium urealyticum (strain ATCC 43042 / DSM 7109)).